Consider the following 421-residue polypeptide: Nucleoprotein (421 aa).

The span at 1–11 shows a compositional bias: polar residues; it reads MSDNGPQSQRS. Disordered stretches follow at residues 1 to 50 and 63 to 82; these read MSDN…NNTA and ELRF…GKDD. Positions 41 to 186 are RNA-binding; the sequence is RPQGLPNNTA…RGGSQSSSRS (146 aa). Residues 48 to 175 enclose the CoV N NTD domain; that stretch reads NTASWFTALT…TLPKGFYAEG (128 aa). Residues Arg-92, Arg-107, and Arg-149 each contribute to the RNA site. 3 disordered regions span residues 168–212, 233–271, and 361–421; these read PKGF…RLAS, KVSG…YNVT, and KTFP…STQA. At Ser-176 the chain carries Phosphoserine; by host. Over residues 179-212 the composition is skewed to low complexity; that stretch reads GSQSSSRSSSRSRGNSRNSTPGSSRGSSPARLAS. A compositionally biased stretch (polar residues) spans 237 to 248; the sequence is KGQQQPGQTVTK. In terms of domain architecture, CoV N CTD spans 247 to 364; sequence TKKSAAEASK…KHIDAYKTFP (118 aa). The segment at 258 to 361 is dimerization; that stretch reads PRQKRTATKQ…LLNKHIDAYK (104 aa). Residues 367 to 378 are compositionally biased toward basic and acidic residues; it reads EPKKDKKKKTDE. Residues 405–421 are compositionally biased toward polar residues; it reads RQLQHSMSGASADSTQA.

This sequence belongs to the betacoronavirus nucleocapsid protein family. Homooligomer. Both monomeric and oligomeric forms interact with RNA. Interacts with protein M. Interacts with NSP3; this interaction serves to tether the genome to the newly translated replicase-transcriptase complex at a very early stage of infection. Post-translationally, ADP-ribosylated. The ADP-ribosylation is retained in the virion during infection. In terms of processing, phosphorylated on serine and threonine residues.

It is found in the virion. Its subcellular location is the host endoplasmic reticulum-Golgi intermediate compartment. The protein localises to the host Golgi apparatus. In terms of biological role, packages the positive strand viral genome RNA into a helical ribonucleocapsid (RNP) and plays a fundamental role during virion assembly through its interactions with the viral genome and membrane protein M. Plays an important role in enhancing the efficiency of subgenomic viral RNA transcription as well as viral replication. This chain is Nucleoprotein, found in Rhinolophus sinicus (Chinese rufous horseshoe bat).